Reading from the N-terminus, the 433-residue chain is UPF0597 protein PG_0909 (433 aa).

Belongs to the UPF0597 family.

The polypeptide is UPF0597 protein PG_0909 (Porphyromonas gingivalis (strain ATCC BAA-308 / W83)).